Here is a 1012-residue protein sequence, read N- to C-terminus: Vacuolar membrane protease (1012 aa).

At 1–60 (MRRSTDPRNLLVRRGPLLVDGESAISELDPGFFPTGDAPKMSSTTRRRFNLIAFTPGPVT) the chain is on the cytoplasmic side. A helical transmembrane segment spans residues 61 to 81 (VISSLVYLALLIPLLLVHTIV). Over 82–432 (PSAPKSNPKG…SFAVFRLHTL (351 aa)) the chain is Vacuolar. Asparagine 159 is a glycosylation site (N-linked (GlcNAc...) asparagine). 2 residues coordinate Zn(2+): histidine 215 and aspartate 227. Residue glutamate 261 is the Proton acceptor of the active site. Zn(2+)-binding residues include glutamate 262, glutamate 287, and histidine 360. The helical transmembrane segment at 433–453 (FAISVTLLVVCPIVLFVIGII) threads the bilayer. Topologically, residues 454–487 (LSKMDKMYLFSIHETIPETKEKVSVRGLRGLFRY) are cytoplasmic. Residues 488–508 (PIILVVSSGILIGLSYLLAKV) form a helical membrane-spanning segment. Over 509–518 (NPFIVHSSSY) the chain is Vacuolar. The chain crosses the membrane as a helical span at residues 519–539 (AVWSMMLSSWIFMTWFLSCIA). Over 540–550 (DFFRPSALHRA) the chain is Cytoplasmic. A helical transmembrane segment spans residues 551-571 (YTFTWQLLVMWVLLVISTVYV). Residues 572–575 (NQHD) lie on the Vacuolar side of the membrane. The chain crosses the membrane as a helical span at residues 576–596 (IAAGYFIVFYFAGTFLATLIS). Residues 597–710 (YLELFALPNK…WSASLPTWTW (114 aa)) lie on the Cytoplasmic side of the membrane. Over residues 614–629 (SQYPSRLGSNRSSRIL) the composition is skewed to polar residues. The interval 614–660 (SQYPSRLGSNRSSRILSPSADELPTGGDNNGEIYDGEEEPTESSSLL) is disordered. Residues 711-731 (VLQFLFVGPVVIMFIGQLGLF) traverse the membrane as a helical segment. Residues 732–743 (LTSAMNQVGADG) lie on the Vacuolar side of the membrane. A helical membrane pass occupies residues 744–764 (VGLLVVYIAIAVFSVLLLIPL). Over 765–777 (SPFIHRFTYHVPT) the chain is Cytoplasmic. The chain crosses the membrane as a helical span at residues 778 to 798 (FLLLVFIATLIYNLAAFPFSA). The Vacuolar portion of the chain corresponds to 799–1012 (ENRLKIFFVQ…DGLVEVSRGF (214 aa)). N-linked (GlcNAc...) asparagine glycosylation is found at asparagine 842 and asparagine 878.

It belongs to the peptidase M28 family. Zn(2+) is required as a cofactor.

Its subcellular location is the vacuole membrane. May be involved in vacuolar sorting and osmoregulation. This Coccidioides posadasii (strain C735) (Valley fever fungus) protein is Vacuolar membrane protease.